A 306-amino-acid chain; its full sequence is NADH-cytochrome b5 reductase 2-B (306 aa).

A helical transmembrane segment spans residues 12–32 (PLLLSSGIAVTAAAAVYFSTG). The region spanning 53–157 (STWVDLPLVK…TGPIVKYEWK (105 aa)) is the FAD-binding FR-type domain. Position 160–195 (160–195 (KFDSVTLLGAGSGITPLYQLMGSILSNPEDKTKINL)) interacts with FAD.

It belongs to the flavoprotein pyridine nucleotide cytochrome reductase family. It depends on FAD as a cofactor.

The protein localises to the mitochondrion outer membrane. The catalysed reaction is 2 Fe(III)-[cytochrome b5] + NADH = 2 Fe(II)-[cytochrome b5] + NAD(+) + H(+). Its function is as follows. May mediate the reduction of outer membrane cytochrome b5. In Vanderwaltozyma polyspora (strain ATCC 22028 / DSM 70294 / BCRC 21397 / CBS 2163 / NBRC 10782 / NRRL Y-8283 / UCD 57-17) (Kluyveromyces polysporus), this protein is NADH-cytochrome b5 reductase 2-B (MCR1B).